The chain runs to 904 residues: Alanine--tRNA ligase (904 aa).

Zn(2+) is bound by residues His-600, His-604, Cys-704, and His-708.

The protein belongs to the class-II aminoacyl-tRNA synthetase family. Zn(2+) serves as cofactor.

It localises to the cytoplasm. The catalysed reaction is tRNA(Ala) + L-alanine + ATP = L-alanyl-tRNA(Ala) + AMP + diphosphate. In terms of biological role, catalyzes the attachment of alanine to tRNA(Ala) in a two-step reaction: alanine is first activated by ATP to form Ala-AMP and then transferred to the acceptor end of tRNA(Ala). Also edits incorrectly charged Ser-tRNA(Ala) and Gly-tRNA(Ala) via its editing domain. This chain is Alanine--tRNA ligase, found in Metallosphaera sedula (strain ATCC 51363 / DSM 5348 / JCM 9185 / NBRC 15509 / TH2).